A 240-amino-acid polypeptide reads, in one-letter code: tRNA (guanine-N(1)-)-methyltransferase (240 aa).

S-adenosyl-L-methionine-binding positions include Gly110 and 130–135 (VGDYVL).

Belongs to the RNA methyltransferase TrmD family. Homodimer.

The protein localises to the cytoplasm. The catalysed reaction is guanosine(37) in tRNA + S-adenosyl-L-methionine = N(1)-methylguanosine(37) in tRNA + S-adenosyl-L-homocysteine + H(+). Its function is as follows. Specifically methylates guanosine-37 in various tRNAs. This chain is tRNA (guanine-N(1)-)-methyltransferase, found in Borrelia recurrentis (strain A1).